A 317-amino-acid polypeptide reads, in one-letter code: Ribosomal RNA small subunit methyltransferase H (317 aa).

S-adenosyl-L-methionine contacts are provided by residues 39 to 41, Asp59, Phe83, Asp104, and Gln111; that span reads GGH.

It belongs to the methyltransferase superfamily. RsmH family.

It localises to the cytoplasm. It carries out the reaction cytidine(1402) in 16S rRNA + S-adenosyl-L-methionine = N(4)-methylcytidine(1402) in 16S rRNA + S-adenosyl-L-homocysteine + H(+). In terms of biological role, specifically methylates the N4 position of cytidine in position 1402 (C1402) of 16S rRNA. This Paraburkholderia phytofirmans (strain DSM 17436 / LMG 22146 / PsJN) (Burkholderia phytofirmans) protein is Ribosomal RNA small subunit methyltransferase H.